Reading from the N-terminus, the 503-residue chain is Major facilitator superfamily domain-containing protein 4A (503 aa).

Helical transmembrane passes span 19–39 (LTYW…GPTL), 53–73 (ITWV…LGGV), 82–102 (LFLL…IPFC), 105–125 (VGVL…IDTI), 139–159 (AIFL…SPLI), 214–234 (YAFW…FYLI), 289–309 (IWNA…TLFM), 338–358 (GYLP…SIPV), 366–386 (SMLF…LLSQ), 392–412 (MFVG…SMLA), 427–447 (VLVT…GSVM), and 455–475 (FLVC…VLLV). Positions 484-503 (SEDSACKPPGLDGEATSYQS) are disordered.

This sequence belongs to the major facilitator superfamily.

The protein resides in the membrane. The polypeptide is Major facilitator superfamily domain-containing protein 4A (mfsd4a) (Xenopus tropicalis (Western clawed frog)).